A 176-amino-acid polypeptide reads, in one-letter code: NAD(P)H-quinone oxidoreductase subunit 6, chloroplastic (176 aa).

A run of 5 helical transmembrane segments spans residues 10 to 30 (ILLVFLGSGIVLGSLGVILLT), 32 to 52 (TIYSAFSLGFVLVCISLFYIL), 61 to 81 (AQLLIYVGAINVLIIFAVMFM), 92 to 112 (IWTVGDGVTSLVCTSIFFSLI), and 152 to 172 (FILPFELISIVLLVALIGAIA).

This sequence belongs to the complex I subunit 6 family. In terms of assembly, NDH is composed of at least 16 different subunits, 5 of which are encoded in the nucleus.

The protein resides in the plastid. Its subcellular location is the chloroplast thylakoid membrane. The catalysed reaction is a plastoquinone + NADH + (n+1) H(+)(in) = a plastoquinol + NAD(+) + n H(+)(out). The enzyme catalyses a plastoquinone + NADPH + (n+1) H(+)(in) = a plastoquinol + NADP(+) + n H(+)(out). NDH shuttles electrons from NAD(P)H:plastoquinone, via FMN and iron-sulfur (Fe-S) centers, to quinones in the photosynthetic chain and possibly in a chloroplast respiratory chain. The immediate electron acceptor for the enzyme in this species is believed to be plastoquinone. Couples the redox reaction to proton translocation, and thus conserves the redox energy in a proton gradient. The protein is NAD(P)H-quinone oxidoreductase subunit 6, chloroplastic (ndhG) of Piper cenocladum (Ant piper).